Here is a 402-residue protein sequence, read N- to C-terminus: Advanced glycosylation end product-specific receptor (402 aa).

The N-terminal stretch at methionine 1–glycine 22 is a signal peptide. The Ig-like V-type domain occupies glycine 23–lysine 109. Topologically, residues glycine 23 to alanine 340 are extracellular. Residues asparagine 25 and asparagine 80 are each glycosylated (N-linked (GlcNAc...) asparagine). Intrachain disulfides connect cysteine 38/cysteine 98 and cysteine 143/cysteine 206. Ig-like C2-type domains follow at residues proline 123 to asparagine 219 and proline 233 to serine 315. The disordered stretch occupies residues glycine 295–glycine 332. The helical transmembrane segment at leucine 341–tryptophan 361 threads the bilayer. The Cytoplasmic portion of the chain corresponds to arginine 362–proline 402. Residues glutamine 365–proline 402 form a disordered region. Phosphoserine; by ATM occurs at positions 376 and 389. Positions serine 376 to methionine 394 are enriched in acidic residues.

Constitutive homodimer; disulfide-linked. Forms homooligomers. Interacts with S100A1 and APP. Interacts with S100B, S100A12 and S100A14. Interacts with TIRAP. Interacts with HMGB1. Interacts with LGP2; this interaction plays an important role in AGER-mediated pro-inflammatory responses and cytokine release. Interacts with double-strand break repair protein MRE11 which is a core component of the MRN complex; the interaction enhances MRE11 endonuclease activity and promotes DNA repair. Interacts with the MCM2-7 complex via interaction with complex member MCM2; the interaction is increased following DNA replication stress and stabilizes the MCM2-7 complex at replication forks. Post-translationally, phosphorylated on its cytoplasmic domain by PKCzeta/PRKCZ upon ligand binding. Phosphorylated by ATM following DNA damage. In terms of processing, targeted by the ubiquitin E3 ligase subunit FBXO10 to mediate its ubiquitination and degradation. In terms of tissue distribution, isoform 1: Expressed at higher levels in the coronary arterioles in type 2 diabetic mice (at protein level). Endothelial cells. Expressed in lung, kidney, brain and heart. Most prevalent isoform with the highest level in heart. Isoform 2: Expressed in brain, lung, kidney and small intestine with the highest level in lung. Expressed in brain, lung, kidney and small intestine with the highest level in small intestine (at protein level). Detected in neurons of the cerebrum, bronchial epithelium, endothelial cells, tubular cells of kidney and epithelial cells of small intestine (at protein level). Expression is increased in the kidney of diabetic wild-type mice (at protein level), but not in the other tissues. Expressed only in kidney. Expression is increased in the kidney of diabetic mice. Isoform 3: Expressed in lung, kidney and heart. The second most prevalent isoform with the highest level in lung. Not expressed in brain. Isoform 4: Expressed at very low level in lung only. Isoform 5: Expressed at very low level in lung only. Isoform 6: Expressed at very low level in lung only. Isoform 7: Expressed at very low level in heart only. Isoform 8: Expressed at very low level in lung only. Isoform 9: Expressed at very low level in heart only. Isoform 10: Expressed in lung, brain, heart and kidney with a very high level in kidney. Isoform 11: Expressed in brain, kidney and heart. Not expressed in lung. Isoform 12: Expressed at very low level in lung and kidney. Isoform 13: Expressed at very low level in lung only.

The protein localises to the cell membrane. Its subcellular location is the cell projection. It localises to the phagocytic cup. The protein resides in the early endosome. It is found in the nucleus. The protein localises to the secreted. Cell surface pattern recognition receptor that senses endogenous stress signals with a broad ligand repertoire including advanced glycation end products, S100 proteins, high-mobility group box 1 protein/HMGB1, amyloid beta/APP oligomers, nucleic acids, histones, phospholipids and glycosaminoglycans. Advanced glycosylation end products are nonenzymatically glycosylated proteins which accumulate in vascular tissue in aging and at an accelerated rate in diabetes. These ligands accumulate at inflammatory sites during the pathogenesis of various diseases including diabetes, vascular complications, neurodegenerative disorders and cancers, and RAGE transduces their binding into pro-inflammatory responses. Upon ligand binding, uses TIRAP and MYD88 as adapters to transduce the signal ultimately leading to the induction of inflammatory cytokines IL6, IL8 and TNFalpha through activation of NF-kappa-B. Interaction with S100A12 on endothelium, mononuclear phagocytes, and lymphocytes triggers cellular activation, with generation of key pro-inflammatory mediators. Interaction with S100B after myocardial infarction may play a role in myocyte apoptosis by activating ERK1/2 and p53/TP53 signaling. Contributes to the translocation of amyloid-beta peptide (ABPP) across the cell membrane from the extracellular to the intracellular space in cortical neurons. ABPP-initiated RAGE signaling, especially stimulation of p38 mitogen-activated protein kinase (MAPK), has the capacity to drive a transport system delivering ABPP as a complex with RAGE to the intraneuronal space. Participates in endothelial albumin transcytosis together with HMGB1 through the RAGE/SRC/Caveolin-1 pathway, leading to endothelial hyperpermeability. Mediates the loading of HMGB1 in extracellular vesicles (EVs) that shuttle HMGB1 to hepatocytes by transferrin-mediated endocytosis and subsequently promote hepatocyte pyroptosis by activating the NLRP3 inflammasome. Binds to DNA and promotes extracellular hypomethylated DNA (CpG DNA) uptake by cells via the endosomal route to activate inflammatory responses. Mediates phagocytosis by non-professional phagocytes (NPP) and this is enhanced by binding to ligands including RNA, DNA, HMGB1 and histones. Promotes NPP-mediated phagocytosis of Saccharomyces cerevisiae spores by binding to RNA attached to the spore wall. Also promotes NPP-mediated phagocytosis of apoptotic cells. Following DNA damage, recruited to DNA double-strand break sites where it colocalizes with the MRN repair complex via interaction with double-strand break repair protein MRE11. Enhances the endonuclease activity of MRE11, promoting the end resection of damaged DNA. Promotes DNA damage repair in trophoblasts which enhances trophoblast invasion and contributes to placental development and maintenance. Protects cells from DNA replication stress by localizing to damaged replication forks where it stabilizes the MCM2-7 complex and promotes faithful progression of the replication fork. Functionally, is able to advanced glycosylation end product (AGE)-induce nuclear factor NF-kappa-B activation. Its function is as follows. Down-regulates receptor for advanced glycosylation end products (RAGE)-ligand induced signaling through various MAPK pathways including ERK1/2, p38 and SAPK/JNK. Significantly affects tumor cell properties through decreasing cell migration, invasion, adhesion and proliferation, and increasing cellular apoptosis. Exhibits drastic inhibition on tumorigenesis in vitro. The polypeptide is Advanced glycosylation end product-specific receptor (Ager) (Mus musculus (Mouse)).